Here is a 523-residue protein sequence, read N- to C-terminus: Endoglucanase 19 (523 aa).

An N-terminal signal peptide occupies residues 1-52; sequence MCSWSLSSHTLTSPVRQAAMEPKSSSCGGAGIRLRLLVVLHLLLLVPSSAMA. Asp-107 serves as the catalytic Nucleophile. N-linked (GlcNAc...) asparagine glycosylation occurs at Asn-279. Residues His-442, Asp-493, and Glu-502 contribute to the active site.

This sequence belongs to the glycosyl hydrolase 9 (cellulase E) family.

It localises to the secreted. It catalyses the reaction Endohydrolysis of (1-&gt;4)-beta-D-glucosidic linkages in cellulose, lichenin and cereal beta-D-glucans.. The protein is Endoglucanase 19 of Oryza sativa subsp. japonica (Rice).